Consider the following 530-residue polypeptide: ATP synthase subunit alpha (530 aa).

ATP is bound at residue 169-176; sequence GDRQTGKT.

The protein belongs to the ATPase alpha/beta chains family. F-type ATPases have 2 components, CF(1) - the catalytic core - and CF(0) - the membrane proton channel. CF(1) has five subunits: alpha(3), beta(3), gamma(1), delta(1), epsilon(1). CF(0) has three main subunits: a(1), b(2) and c(9-12). The alpha and beta chains form an alternating ring which encloses part of the gamma chain. CF(1) is attached to CF(0) by a central stalk formed by the gamma and epsilon chains, while a peripheral stalk is formed by the delta and b chains.

The protein resides in the cell membrane. The enzyme catalyses ATP + H2O + 4 H(+)(in) = ADP + phosphate + 5 H(+)(out). Produces ATP from ADP in the presence of a proton gradient across the membrane. The alpha chain is a regulatory subunit. The polypeptide is ATP synthase subunit alpha (Mycoplasmopsis synoviae (strain 53) (Mycoplasma synoviae)).